The chain runs to 188 residues: Elongation factor P (188 aa).

Lys34 carries the post-translational modification N6-(3,6-diaminohexanoyl)-5-hydroxylysine.

Belongs to the elongation factor P family. Post-translationally, may be beta-lysylated on the epsilon-amino group of Lys-34 by the combined action of EpmA and EpmB, and then hydroxylated on the C5 position of the same residue by EpmC (if this protein is present). Lysylation is critical for the stimulatory effect of EF-P on peptide-bond formation. The lysylation moiety may extend toward the peptidyltransferase center and stabilize the terminal 3-CCA end of the tRNA. Hydroxylation of the C5 position on Lys-34 may allow additional potential stabilizing hydrogen-bond interactions with the P-tRNA.

The protein localises to the cytoplasm. Its pathway is protein biosynthesis; polypeptide chain elongation. Functionally, involved in peptide bond synthesis. Alleviates ribosome stalling that occurs when 3 or more consecutive Pro residues or the sequence PPG is present in a protein, possibly by augmenting the peptidyl transferase activity of the ribosome. Modification of Lys-34 is required for alleviation. The polypeptide is Elongation factor P (Vibrio parahaemolyticus serotype O3:K6 (strain RIMD 2210633)).